A 38-amino-acid chain; its full sequence is Photosystem II reaction center protein L (38 aa).

The chain crosses the membrane as a helical span at residues 17-37 (SLYWGLLLIFVLAVLFSSYIF).

This sequence belongs to the PsbL family. PSII is composed of 1 copy each of membrane proteins PsbA, PsbB, PsbC, PsbD, PsbE, PsbF, PsbH, PsbI, PsbJ, PsbK, PsbL, PsbM, PsbT, PsbY, PsbZ, Psb30/Ycf12, at least 3 peripheral proteins of the oxygen-evolving complex and a large number of cofactors. It forms dimeric complexes.

The protein resides in the plastid. It is found in the chloroplast thylakoid membrane. Its function is as follows. One of the components of the core complex of photosystem II (PSII). PSII is a light-driven water:plastoquinone oxidoreductase that uses light energy to abstract electrons from H(2)O, generating O(2) and a proton gradient subsequently used for ATP formation. It consists of a core antenna complex that captures photons, and an electron transfer chain that converts photonic excitation into a charge separation. This subunit is found at the monomer-monomer interface and is required for correct PSII assembly and/or dimerization. The chain is Photosystem II reaction center protein L from Euglena gracilis.